The primary structure comprises 146 residues: Catabolic 3-dehydroquinase (146 aa).

Tyr24 (proton acceptor) is an active-site residue. Substrate contacts are provided by Asn78, His84, and Asp91. His104 serves as the catalytic Proton donor. Residues 105 to 106 (IT) and Arg115 each bind substrate.

It belongs to the type-II 3-dehydroquinase family. As to quaternary structure, homododecamer. Adopts a ring-like structure, composed of an arrangement of two hexameric rings stacked on top of one another.

It carries out the reaction 3-dehydroquinate = 3-dehydroshikimate + H2O. Its pathway is aromatic compound metabolism; 3,4-dihydroxybenzoate biosynthesis; 3,4-dihydroxybenzoate from 3-dehydroquinate: step 1/2. In terms of biological role, is involved in the catabolism of quinate. Allows the utilization of quinate as carbon source via the beta-ketoadipate pathway. The protein is Catabolic 3-dehydroquinase of Candida tropicalis (strain ATCC MYA-3404 / T1) (Yeast).